Reading from the N-terminus, the 172-residue chain is Adenine phosphoribosyltransferase (172 aa).

This sequence belongs to the purine/pyrimidine phosphoribosyltransferase family. As to quaternary structure, homodimer.

It localises to the cytoplasm. It catalyses the reaction AMP + diphosphate = 5-phospho-alpha-D-ribose 1-diphosphate + adenine. The protein operates within purine metabolism; AMP biosynthesis via salvage pathway; AMP from adenine: step 1/1. Catalyzes a salvage reaction resulting in the formation of AMP, that is energically less costly than de novo synthesis. This Exiguobacterium sibiricum (strain DSM 17290 / CCUG 55495 / CIP 109462 / JCM 13490 / 255-15) protein is Adenine phosphoribosyltransferase.